Here is a 280-residue protein sequence, read N- to C-terminus: Phosphatidylglycerol--prolipoprotein diacylglyceryl transferase (280 aa).

A run of 3 helical transmembrane segments spans residues leucine 19–alanine 39, isoleucine 56–glutamine 76, and isoleucine 90–isoleucine 110. Arginine 138 is an a 1,2-diacyl-sn-glycero-3-phospho-(1'-sn-glycerol) binding site. Transmembrane regions (helical) follow at residues leucine 204–glycine 224 and isoleucine 236–tyrosine 256.

The protein belongs to the Lgt family.

It localises to the cell membrane. The catalysed reaction is L-cysteinyl-[prolipoprotein] + a 1,2-diacyl-sn-glycero-3-phospho-(1'-sn-glycerol) = an S-1,2-diacyl-sn-glyceryl-L-cysteinyl-[prolipoprotein] + sn-glycerol 1-phosphate + H(+). The protein operates within protein modification; lipoprotein biosynthesis (diacylglyceryl transfer). Its function is as follows. Catalyzes the transfer of the diacylglyceryl group from phosphatidylglycerol to the sulfhydryl group of the N-terminal cysteine of a prolipoprotein, the first step in the formation of mature lipoproteins. In Staphylococcus aureus (strain MRSA252), this protein is Phosphatidylglycerol--prolipoprotein diacylglyceryl transferase.